The primary structure comprises 202 residues: Dual-action ribosomal maturation protein DarP (202 aa).

A compositionally biased stretch (low complexity) spans M1 to N13. A disordered region spans residues M1 to M39.

This sequence belongs to the DarP family.

The protein localises to the cytoplasm. In terms of biological role, member of a network of 50S ribosomal subunit biogenesis factors which assembles along the 30S-50S interface, preventing incorrect 23S rRNA structures from forming. Promotes peptidyl transferase center (PTC) maturation. In Cupriavidus metallidurans (strain ATCC 43123 / DSM 2839 / NBRC 102507 / CH34) (Ralstonia metallidurans), this protein is Dual-action ribosomal maturation protein DarP.